The following is a 419-amino-acid chain: G protein-activated inward rectifier potassium channel 4 (419 aa).

The disordered stretch occupies residues 1 to 24 (MAGDSRNAMNQDMEIGVTPRDPKK). Topologically, residues 1–86 (MAGDSRNAMN…LFTTLVDLKW (86 aa)) are cytoplasmic. S5 is subject to Phosphoserine. A helical transmembrane segment spans residues 87–111 (RFNLLVFTMVYTITWLFFGFIWWLI). Residues 112-135 (AYIRGDLDHVGDREWIPCVENLSG) are Extracellular-facing. Positions 136–147 (FVSAFLFSIETE) form an intramembrane region, helical; Pore-forming. Positions 148–154 (TTIGYGF) form an intramembrane region, pore-forming. The Selectivity filter motif lies at 149–154 (TIGYGF). Residues 155–163 (RVITEKCPE) lie on the Extracellular side of the membrane. Residues 164-185 (GIVLLLVQAILGSIVNAFMVGC) traverse the membrane as a helical segment. Residues 186 to 419 (MFVKISQPKK…SGSQETKDSA (234 aa)) are Cytoplasmic-facing. Positions 381-419 (PSPPLPGGCVGAELGAEAEQEGEEEPEGLSGSQETKDSA) are disordered. Positions 396–407 (AEAEQEGEEEPE) are enriched in acidic residues.

Belongs to the inward rectifier-type potassium channel (TC 1.A.2.1) family. KCNJ5 subfamily. As to quaternary structure, associates with KCNJ3/GIRK1 or KCNJ6/GIRK2 to form a G-protein-activated heteromultimer pore-forming unit. The resulting inward current is much larger.

Its subcellular location is the membrane. It carries out the reaction K(+)(in) = K(+)(out). Its activity is regulated as follows. Heteromultimer composed of KCNJ3/GIRK1 and KCNJ5/GIRK4 is activated by phosphatidylinositol 4,5 biphosphate (PtdIns(4,5)P2). Inward rectifier potassium channels are characterized by a greater tendency to allow potassium to flow into the cell rather than out of it. Their voltage dependence is regulated by the concentration of extracellular potassium; as external potassium is raised, the voltage range of the channel opening shifts to more positive voltages. The inward rectification is mainly due to the blockage of outward current by internal magnesium. This receptor plays a crucial role in regulating the heartbeat. Can be blocked by external barium. This potassium channel is controlled by G proteins. The sequence is that of G protein-activated inward rectifier potassium channel 4 (KCNJ5) from Bos taurus (Bovine).